A 543-amino-acid polypeptide reads, in one-letter code: Chaperonin GroEL 1 (543 aa).

ATP is bound by residues 29-32 (TLGP), Lys-50, 86-90 (DGTTT), Gly-414, and Asp-493. The disordered stretch occupies residues 524-543 (KEDKGAPAGMGGMPPGGGMY). Over residues 531–543 (AGMGGMPPGGGMY) the composition is skewed to gly residues.

Belongs to the chaperonin (HSP60) family. As to quaternary structure, forms a cylinder of 14 subunits composed of two heptameric rings stacked back-to-back. Interacts with the co-chaperonin GroES.

The protein localises to the cytoplasm. It catalyses the reaction ATP + H2O + a folded polypeptide = ADP + phosphate + an unfolded polypeptide.. In terms of biological role, together with its co-chaperonin GroES, plays an essential role in assisting protein folding. The GroEL-GroES system forms a nano-cage that allows encapsulation of the non-native substrate proteins and provides a physical environment optimized to promote and accelerate protein folding. This Syntrophobacter fumaroxidans (strain DSM 10017 / MPOB) protein is Chaperonin GroEL 1.